The primary structure comprises 286 residues: ATP synthase gamma chain (286 aa).

It belongs to the ATPase gamma chain family. As to quaternary structure, F-type ATPases have 2 components, CF(1) - the catalytic core - and CF(0) - the membrane proton channel. CF(1) has five subunits: alpha(3), beta(3), gamma(1), delta(1), epsilon(1). CF(0) has three main subunits: a, b and c.

The protein localises to the cell membrane. Its function is as follows. Produces ATP from ADP in the presence of a proton gradient across the membrane. The gamma chain is believed to be important in regulating ATPase activity and the flow of protons through the CF(0) complex. The chain is ATP synthase gamma chain from Ureaplasma urealyticum serovar 10 (strain ATCC 33699 / Western).